A 453-amino-acid chain; its full sequence is Crh-like protein CRH11 (453 aa).

Residues 1-21 form the signal peptide; that stretch reads MKFTTLATIASTLLFAANANA. Cysteines 24 and 32 form a disulfide. The region spanning 28–227 is the GH16 domain; sequence KSSDCSPVPA…WAGGITDYSQ (200 aa). Glu-119 functions as the Nucleophile in the catalytic mechanism. Glu-123 serves as the catalytic Proton donor. 3 residues coordinate chitin: Glu-123, Trp-204, and Thr-215. Disordered regions lie at residues 281–343, 362–397, and 410–430; these read LESG…SEKS, KTTV…PASA, and GDAA…TENN. Composition is skewed to low complexity over residues 286-343, 363-397, and 412-425; these read SVDS…SEKS, TTVT…PASA, and AAPS…PSVS. An N-linked (GlcNAc...) asparagine glycan is attached at Asn-290. Residue Asn-430 is the site of GPI-anchor amidated asparagine attachment. Residues 431–453 constitute a propeptide, removed in mature form; the sequence is GAVSVAKTTSLFGFVALIGFLFV.

It belongs to the glycosyl hydrolase 16 family. CRH1 subfamily. Post-translationally, the GPI-anchor is attached to the protein in the endoplasmic reticulum and serves to target the protein to the cell surface. There, the glucosamine-inositol phospholipid moiety is cleaved off and the GPI-modified mannoprotein is covalently attached via its lipidless GPI glycan remnant to the 1,6-beta-glucan of the outer cell wall layer.

The protein resides in the secreted. It is found in the cell wall. It localises to the membrane. The catalysed reaction is Random endo-hydrolysis of N-acetyl-beta-D-glucosaminide (1-&gt;4)-beta-linkages in chitin and chitodextrins.. Its function is as follows. Dual chitinase/transglycosylase that plays a role in cell wall architecture. Chitinase and transglycosylase activities are coupled. Required for the polysaccharide cross-linking at the septa and the cell wall. More specifically, transfers chitin to 1,6-beta-glucan in the cell wall. Plays an important role in fungal pathogenesis via its functions in cell wall assembly and regeneration, filamentation, and adherence to host cells. This is Crh-like protein CRH11 (CRH11) from Candida albicans (strain SC5314 / ATCC MYA-2876) (Yeast).